The primary structure comprises 435 residues: Cell adhesion molecule 2 (435 aa).

An N-terminal signal peptide occupies residues 1–24 (MIWKRSAVLRFYSVCGLLLQGSQG). The Extracellular portion of the chain corresponds to 25 to 367 (QFPLTQNVTV…SLAGQNGPDH (343 aa)). The 93-residue stretch at 27 to 119 (PLTQNVTVVE…PVKTSKAYLT (93 aa)) folds into the Ig-like V-type domain. 2 N-linked (GlcNAc...) asparagine glycosylation sites follow: asparagine 31 and asparagine 51. Disulfide bonds link cysteine 44–cysteine 104, cysteine 146–cysteine 203, and cysteine 248–cysteine 296. 2 Ig-like C2-type domains span residues 127 to 219 (PQIS…VAMQ) and 227 to 312 (PSVK…YVLI). N-linked (GlcNAc...) asparagine glycosylation is present at asparagine 291. Over residues 337-351 (SVTITTSPSTSASSS) the composition is skewed to low complexity. Residues 337–360 (SVTITTSPSTSASSSSRRDPNSLA) are disordered. Residues 368–388 (ALIGGIVAVVVFVTLCSIFLL) form a helical membrane-spanning segment. At 389 to 435 (GRYLARHKGTYLTNEAKGAEDAPDADTAIINAEGSQVNAEEKKEYFI) the chain is on the cytoplasmic side. Serine 423 carries the post-translational modification Phosphoserine.

It belongs to the nectin family. Post-translationally, glycosylation at Asn-51 reduces adhesive binding.

It localises to the cell membrane. Its subcellular location is the synapse. It is found in the cell projection. The protein resides in the axon. Adhesion molecule that engages in homo- and heterophilic interactions with the other nectin-like family members, leading to cell aggregation. Important for synapse organization, providing regulated trans-synaptic adhesion. Preferentially binds to oligodendrocytes. The chain is Cell adhesion molecule 2 (Cadm2) from Mus musculus (Mouse).